A 358-amino-acid polypeptide reads, in one-letter code: Leukotriene B4 receptor 2 (358 aa).

Topologically, residues 1-24 (MSVCYRPPGNETLLSWKGSRATGT) are extracellular. An N-linked (GlcNAc...) asparagine glycan is attached at Asn10. A helical membrane pass occupies residues 25 to 45 (AFLLLAALLGLPGNGFVVWSL). At 46–60 (AGWRPTAGRPLAATL) the chain is on the cytoplasmic side. The helical transmembrane segment at 61–81 (VLHLALADGAVLLLTPLFVAF) threads the bilayer. At 82–96 (LSRQAWPLGQVGCKA) the chain is on the extracellular side. Residues 97 to 117 (VYYVCALSMYASVLLTGLLSL) traverse the membrane as a helical segment. Topologically, residues 118 to 140 (QRCLAVTRPFLAPRLRSPALARR) are cytoplasmic. A helical membrane pass occupies residues 141–161 (LLLGVWLAALVLAVPAAVYRH). Residues 162-185 (LWGDRVCQLCHPSAVHAAAHLSLE) lie on the Extracellular side of the membrane. A helical membrane pass occupies residues 186-206 (TLTAFVLPFGTVLGCYGVTLA). The Cytoplasmic segment spans residues 207 to 225 (RLRGARWGSGRQGTRVGRL). The chain crosses the membrane as a helical span at residues 226 to 246 (VSAIVLAFGLLWAPYHAVNLL). Over 247-275 (QAVAALAPPEGPLARLGGAGQAARAGTTA) the chain is Extracellular. The helical transmembrane segment at 276-296 (LAFFSSSVNPVLYVFTAGDLL) threads the bilayer. Residues 297 to 358 (PRAGPRFLTR…GRMEKDSQEW (62 aa)) are Cytoplasmic-facing. The segment at 315 to 358 (RVGSRSREGTMELRTTPRLKVVGQGRGYGDPGGGGRMEKDSQEW) is disordered. Over residues 338-349 (QGRGYGDPGGGG) the composition is skewed to gly residues.

It belongs to the G-protein coupled receptor 1 family.

It localises to the cell membrane. In terms of biological role, low-affinity receptor for leukotrienes including leukotriene B4. Mediates chemotaxis of granulocytes and macrophages. The response is mediated via G-proteins that activate a phosphatidylinositol-calcium second messenger system. The protein is Leukotriene B4 receptor 2 (Ltb4r2) of Rattus norvegicus (Rat).